Here is a 363-residue protein sequence, read N- to C-terminus: uncharacterized protein (363 aa).

This is an uncharacterized protein from Saccharomyces cerevisiae (strain ATCC 204508 / S288c) (Baker's yeast).